Consider the following 254-residue polypeptide: RxLR effector protein CRE5 (254 aa).

The signal sequence occupies residues 1–19 (MQTIQLIIFVAFVLSRAAA). The N-linked (GlcNAc...) asparagine glycan is linked to Asn-49. A RxLR-dEER motif is present at residues 53–63 (RSLRQHEGEDR). The 64-residue stretch at 191–254 (SRWLSAGVVT…MEEGGVCRAL (64 aa)) folds into the Nudix hydrolase domain. A Nudix box motif is present at residues 228–249 (GGWDRGEKIKKAALREVMEEGG).

This sequence in the N-terminal section; belongs to the RxLR effector family. It in the C-terminal section; belongs to the Nudix hydrolase family.

Its subcellular location is the secreted. It localises to the host cytoplasm. It is found in the host nucleus. The protein resides in the host nucleolus. Functionally, effector that is involved in host plant infection. Contributes to virulence during the early infection stage, by inhibiting plant defense responses induced by both PAMP-triggered immunity (PTI) and effector-triggered immunity (ETI). This chain is RxLR effector protein CRE5, found in Phytophthora infestans (strain T30-4) (Potato late blight agent).